An 887-amino-acid polypeptide reads, in one-letter code: Translation initiation factor IF-2 (887 aa).

Residues 1–259 form a disordered region; that stretch reads MSDEQDQGET…KVGDDRRRGA (259 aa). Residues 62 to 94 are compositionally biased toward low complexity; it reads GRPSAPSRASGGAAAPRGLTAAEQAARQRAVVE. Basic and acidic residues-rich tracts occupy residues 95 to 111 and 119 to 158; these read QQRE…EQEK and EEAR…RRAA. The span at 159–210 shows a compositional bias: low complexity; the sequence is EASQATAAPPAPAAAASPRAAMPAPTAAPARPGAAPARRTAPVPPATSASET. The span at 250–259 shows a compositional bias: basic and acidic residues; sequence KVGDDRRRGA. Residues 386–556 form the tr-type G domain; that stretch reads VRPPVVTIMG…LLQAELLDLK (171 aa). The tract at residues 395-402 is G1; sequence GHVDHGKT. 395 to 402 contributes to the GTP binding site; it reads GHVDHGKT. The G2 stretch occupies residues 420 to 424; the sequence is GITQH. Residues 442-445 are G3; the sequence is DTPG. GTP is bound by residues 442–446 and 496–499; these read DTPGH and NKID. A G4 region spans residues 496–499; it reads NKID. A G5 region spans residues 532-534; it reads SAL.

Belongs to the TRAFAC class translation factor GTPase superfamily. Classic translation factor GTPase family. IF-2 subfamily.

Its subcellular location is the cytoplasm. Its function is as follows. One of the essential components for the initiation of protein synthesis. Protects formylmethionyl-tRNA from spontaneous hydrolysis and promotes its binding to the 30S ribosomal subunits. Also involved in the hydrolysis of GTP during the formation of the 70S ribosomal complex. In Acidiphilium cryptum (strain JF-5), this protein is Translation initiation factor IF-2.